Here is a 227-residue protein sequence, read N- to C-terminus: Lipoprotein-releasing system ATP-binding protein LolD (227 aa).

The region spanning 6 to 227 (LKCENINKFY…MQDGLLKEGA (222 aa)) is the ABC transporter domain. 42–49 (GSSGSGKS) contributes to the ATP binding site.

It belongs to the ABC transporter superfamily. Lipoprotein translocase (TC 3.A.1.125) family. As to quaternary structure, the complex is composed of two ATP-binding proteins (LolD) and two transmembrane proteins (LolC and LolE).

It localises to the cell inner membrane. Part of the ABC transporter complex LolCDE involved in the translocation of mature outer membrane-directed lipoproteins, from the inner membrane to the periplasmic chaperone, LolA. Responsible for the formation of the LolA-lipoprotein complex in an ATP-dependent manner. The polypeptide is Lipoprotein-releasing system ATP-binding protein LolD (Haemophilus influenzae (strain 86-028NP)).